Reading from the N-terminus, the 159-residue chain is NADH-quinone oxidoreductase subunit B (159 aa).

[4Fe-4S] cluster contacts are provided by Cys-36, Cys-37, Cys-102, and Cys-132.

Belongs to the complex I 20 kDa subunit family. In terms of assembly, NDH-1 is composed of 14 different subunits. Subunits NuoB, C, D, E, F, and G constitute the peripheral sector of the complex. [4Fe-4S] cluster serves as cofactor.

It localises to the cell inner membrane. The catalysed reaction is a quinone + NADH + 5 H(+)(in) = a quinol + NAD(+) + 4 H(+)(out). NDH-1 shuttles electrons from NADH, via FMN and iron-sulfur (Fe-S) centers, to quinones in the respiratory chain. Couples the redox reaction to proton translocation (for every two electrons transferred, four hydrogen ions are translocated across the cytoplasmic membrane), and thus conserves the redox energy in a proton gradient. The protein is NADH-quinone oxidoreductase subunit B of Albidiferax ferrireducens (strain ATCC BAA-621 / DSM 15236 / T118) (Rhodoferax ferrireducens).